Reading from the N-terminus, the 131-residue chain is Small ribosomal subunit protein uS8 (131 aa).

Positions 1–27 (MSMTDPVADMLTRIRNGQRASKNEVSM) are disordered.

This sequence belongs to the universal ribosomal protein uS8 family. Part of the 30S ribosomal subunit. Contacts proteins S5 and S12.

In terms of biological role, one of the primary rRNA binding proteins, it binds directly to 16S rRNA central domain where it helps coordinate assembly of the platform of the 30S subunit. This chain is Small ribosomal subunit protein uS8, found in Thioalkalivibrio sulfidiphilus (strain HL-EbGR7).